Here is a 169-residue protein sequence, read N- to C-terminus: Peptide methionine sulfoxide reductase MsrA (169 aa).

Residue C10 is part of the active site.

It belongs to the MsrA Met sulfoxide reductase family.

The enzyme catalyses L-methionyl-[protein] + [thioredoxin]-disulfide + H2O = L-methionyl-(S)-S-oxide-[protein] + [thioredoxin]-dithiol. It carries out the reaction [thioredoxin]-disulfide + L-methionine + H2O = L-methionine (S)-S-oxide + [thioredoxin]-dithiol. Has an important function as a repair enzyme for proteins that have been inactivated by oxidation. Catalyzes the reversible oxidation-reduction of methionine sulfoxide in proteins to methionine. This chain is Peptide methionine sulfoxide reductase MsrA, found in Streptococcus pyogenes serotype M3 (strain ATCC BAA-595 / MGAS315).